A 544-amino-acid polypeptide reads, in one-letter code: Pentatricopeptide repeat-containing protein At1g66345, mitochondrial (544 aa).

Residues 1-116 (MASALRRLVE…RNLRHGIKSY (116 aa)) constitute a mitochondrion transit peptide. 11 PPR repeats span residues 163-197 (TPLVFDLLVQCYAKIRYLELGFDVFKRLCDCGFTL), 198-232 (SVITLNTLIHYSSKSKIDDLVWRIYECAIDKRIYP), 233-267 (NEITIRIMIQVLCKEGRLKEVVDLLDRICGKRCLP), 268-302 (SVIVNTSLVFRVLEEMRIEESMSLLKRLLMKNMVV), 303-337 (DTIGYSIVVYAKAKEGDLVSARKVFDEMLQRGFSA), 338-372 (NSFVYTVFVRVCCEKGDVKEAERLLSEMEESGVSP), 373-407 (YDETFNCLIGGFARFGWEEKGLEYCEVMVTRGLMP), 408-442 (SCSAFNEMVKSVSKIENVNRANEILTKSIDKGFVP), 443-477 (DEHTYSHLIRGFIEGNDIDQALKLFYEMEYRKMSP), 478-512 (GFEVFRSLIVGLCTCGKVEAGEKYLKIMKKRLIEP), and 513-544 (NADIYDALIKAFQKIGDKTNADRVYNEMISVR).

The protein belongs to the PPR family. P subfamily.

It localises to the mitochondrion. This chain is Pentatricopeptide repeat-containing protein At1g66345, mitochondrial, found in Arabidopsis thaliana (Mouse-ear cress).